Reading from the N-terminus, the 182-residue chain is Molybdopterin synthase catalytic subunit (182 aa).

Residues 119-120 (HR), K135, and 142-144 (KRE) each bind substrate. Positions 152–182 (VWRANRDGAPGQRIDTAEPAVGAGSGGEIDD) are disordered.

Belongs to the MoaE family. MOCS2B subfamily. In terms of assembly, heterotetramer; composed of 2 small (MOCS2A) and 2 large (MOCS2B) subunits.

It localises to the cytoplasm. It carries out the reaction 2 [molybdopterin-synthase sulfur-carrier protein]-C-terminal-Gly-aminoethanethioate + cyclic pyranopterin phosphate + H2O = molybdopterin + 2 [molybdopterin-synthase sulfur-carrier protein]-C-terminal Gly-Gly + 2 H(+). The protein operates within cofactor biosynthesis; molybdopterin biosynthesis. Functionally, catalytic subunit of the molybdopterin synthase complex, a complex that catalyzes the conversion of precursor Z into molybdopterin. Acts by mediating the incorporation of 2 sulfur atoms from thiocarboxylated MOCS2A into precursor Z to generate a dithiolene group. The polypeptide is Molybdopterin synthase catalytic subunit (Pyricularia oryzae (strain 70-15 / ATCC MYA-4617 / FGSC 8958) (Rice blast fungus)).